Reading from the N-terminus, the 266-residue chain is MSDHGRMHIPESGLATPAAAHSDDPPHPHFNRRVTSFRARRSTISDAQQATWDRLWPELGRQVRDGDAPAGRLDTTPAGRLDTEAWFGRHAPVVLEIGCGTGTSTLAMAQAEPDIDVVAVEVYRRGLAQLLSAMDREGVTNIRLIRGDGVDVLTHMFGPDSLTGVRVFFPDPWPKARHHKRRLLQPDTVALIADRLRPGGILHAATDHMGYAGHIAEVGDAEPRLRRIDPDDAGLPISTARPVTKYQRKALAGTEVAELLWEKTTP.

The interval 1–32 (MSDHGRMHIPESGLATPAAAHSDDPPHPHFNR) is disordered. Residues Glu96, Glu121, Asp148, and Asp171 each contribute to the S-adenosyl-L-methionine site. Asp171 is an active-site residue. Substrate is bound by residues Lys175 and Asp207.

It belongs to the class I-like SAM-binding methyltransferase superfamily. TrmB family.

The enzyme catalyses guanosine(46) in tRNA + S-adenosyl-L-methionine = N(7)-methylguanosine(46) in tRNA + S-adenosyl-L-homocysteine. It participates in tRNA modification; N(7)-methylguanine-tRNA biosynthesis. Its function is as follows. Catalyzes the formation of N(7)-methylguanine at position 46 (m7G46) in tRNA. The chain is tRNA (guanine-N(7)-)-methyltransferase from Mycolicibacterium vanbaalenii (strain DSM 7251 / JCM 13017 / BCRC 16820 / KCTC 9966 / NRRL B-24157 / PYR-1) (Mycobacterium vanbaalenii).